Reading from the N-terminus, the 356-residue chain is Myricetin 7/4'-O-methyltransferase 2 (356 aa).

Asp222 contributes to the S-adenosyl-L-methionine binding site. The active-site Proton acceptor is the His260.

This sequence belongs to the class I-like SAM-binding methyltransferase superfamily. Cation-independent O-methyltransferase family. In terms of assembly, homodimer.

The enzyme catalyses quercetin + S-adenosyl-L-methionine = rhamnetin + S-adenosyl-L-homocysteine + H(+). The catalysed reaction is kaempferol + S-adenosyl-L-methionine = kaempferide + S-adenosyl-L-homocysteine + H(+). It catalyses the reaction myricetin + S-adenosyl-L-methionine = 7-O-methylmyricetin + S-adenosyl-L-homocysteine + H(+). It carries out the reaction kaempferide + S-adenosyl-L-methionine = 7,4'-O-dimethylkaempferol + S-adenosyl-L-homocysteine + H(+). The enzyme catalyses isorhamnetin + S-adenosyl-L-methionine = 3',4'-O-dimethylquercetin + S-adenosyl-L-homocysteine + 2 H(+). The catalysed reaction is 3',4',5,7-tetrahydroxy-3-methoxyflavone + S-adenosyl-L-methionine = 3',4',5-trihydroxy-3,7-dimethoxyflavone + S-adenosyl-L-homocysteine + H(+). It catalyses the reaction rhamnetin + S-adenosyl-L-methionine = 7,4'-O-dimethylquercetin + S-adenosyl-L-homocysteine + H(+). It carries out the reaction syringetin + S-adenosyl-L-methionine = 7,3',5'-O-trimethylmyricetin + S-adenosyl-L-homocysteine + H(+). The enzyme catalyses 3',4',5'-O-trimethylmyricetin + S-adenosyl-L-methionine = 7,3',4',5'-O-tetramethylmyricetin + S-adenosyl-L-homocysteine. It functions in the pathway flavonoid metabolism. In terms of biological role, flavonoid 7/4'-O-methyltransferase involved in the biosynthesis of polymethoxylated flavonoids natural products such as myricetin derivatives, aroma compounds possessing antioxidant properties and exhibiting pharmacological activities such as anti-carcinogen, anti-viral, anti-thrombotic, anti-diabetic, anti-atherosclerotic, and anti-inflammatory effects. Catalyzes S-adenosylmethionine-dependent regioselective 7/4'-O-methylation of flavonoids; active on various hydroxylated flavonoid substrates. This chain is Myricetin 7/4'-O-methyltransferase 2, found in Solanum lycopersicum (Tomato).